Reading from the N-terminus, the 341-residue chain is tRNA N6-adenosine threonylcarbamoyltransferase (341 aa).

Residues H113 and H117 each coordinate Fe cation. Substrate contacts are provided by residues 136-140 (IISGG), D169, G182, and N280. A Fe cation-binding site is contributed by D308.

Belongs to the KAE1 / TsaD family. It depends on Fe(2+) as a cofactor.

Its subcellular location is the cytoplasm. The enzyme catalyses L-threonylcarbamoyladenylate + adenosine(37) in tRNA = N(6)-L-threonylcarbamoyladenosine(37) in tRNA + AMP + H(+). In terms of biological role, required for the formation of a threonylcarbamoyl group on adenosine at position 37 (t(6)A37) in tRNAs that read codons beginning with adenine. Is involved in the transfer of the threonylcarbamoyl moiety of threonylcarbamoyl-AMP (TC-AMP) to the N6 group of A37, together with TsaE and TsaB. TsaD likely plays a direct catalytic role in this reaction. The protein is tRNA N6-adenosine threonylcarbamoyltransferase of Anaplasma marginale (strain St. Maries).